The following is a 453-amino-acid chain: UDP-N-acetylmuramoylalanine--D-glutamate ligase (453 aa).

An ATP-binding site is contributed by 115 to 121 (GSNGKTT).

The protein belongs to the MurCDEF family.

The protein resides in the cytoplasm. It catalyses the reaction UDP-N-acetyl-alpha-D-muramoyl-L-alanine + D-glutamate + ATP = UDP-N-acetyl-alpha-D-muramoyl-L-alanyl-D-glutamate + ADP + phosphate + H(+). Its pathway is cell wall biogenesis; peptidoglycan biosynthesis. Its function is as follows. Cell wall formation. Catalyzes the addition of glutamate to the nucleotide precursor UDP-N-acetylmuramoyl-L-alanine (UMA). The protein is UDP-N-acetylmuramoylalanine--D-glutamate ligase of Koribacter versatilis (strain Ellin345).